A 284-amino-acid polypeptide reads, in one-letter code: RNase adapter protein RapZ (284 aa).

8 to 15 (GRSGSGKS) is a binding site for ATP. Residue 56 to 59 (DVRN) coordinates GTP. The RNA-binding stretch occupies residues 266–284 (RSRGKNVQSRHRTLEKRKT).

Belongs to the RapZ-like family. RapZ subfamily. As to quaternary structure, homotrimer.

In terms of biological role, modulates the synthesis of GlmS, by affecting the processing and stability of the regulatory small RNA GlmZ. When glucosamine-6-phosphate (GlcN6P) concentrations are high in the cell, RapZ binds GlmZ and targets it to cleavage by RNase E. Consequently, GlmZ is inactivated and unable to activate GlmS synthesis. Under low GlcN6P concentrations, RapZ is sequestered and inactivated by an other regulatory small RNA, GlmY, preventing GlmZ degradation and leading to synthesis of GlmS. The protein is RNase adapter protein RapZ of Salmonella typhi.